Here is a 600-residue protein sequence, read N- to C-terminus: E3 ubiquitin-protein ligase RLIM (600 aa).

The residue at position 1 (Met-1) is an N-acetylmethionine. The span at 1 to 11 shows a compositional bias: basic and acidic residues; it reads MENSDSNDKGS. 3 disordered regions span residues 1-24, 49-355, and 417-497; these read MENS…QMDR, NNLL…ERGG, and SDSE…VTFD. Composition is skewed to polar residues over residues 103–131 and 140–152; these read SVRQ…NPNS and INVN…QTSE. Ser-163 bears the Phosphoserine mark. A compositionally biased stretch (polar residues) spans 166 to 175; the sequence is NMESSSQRQM. Positions 176–187 are enriched in low complexity; the sequence is ENSASESASARP. A phosphoserine mark is found at Ser-194, Ser-227, and Ser-229. Residues 213–228 are compositionally biased toward basic and acidic residues; sequence RSPEHRRTRARAERSR. Residues 244–255 are compositionally biased toward polar residues; that stretch reads LEQSSENEPEGS. Phosphoserine is present on Ser-269. The segment covering 288 to 306 has biased composition (low complexity); the sequence is SQGTSSSDTGSNSESSGSG. Over residues 322 to 332 the composition is skewed to basic and acidic residues; that stretch reads RPGEYRQRDSI. Positions 333–349 are enriched in polar residues; that stretch reads ASRTRSRSQAPNNTVTY. Low complexity predominate over residues 448–475; it reads SGSSSSSSPSPSSSGESSESSSEMFEGS. An RING-type zinc finger spans residues 546–587; it reads CSVCITEYTEGNKLRKLPCSHEYHVHCIDRWLSENSTCPICR. The short motif at 597–600 is the PDZ-binding element; sequence ESVV.

The protein belongs to the RNF12 family. In terms of assembly, interacts (via N-terminus) with TERF1. Interacts (via C-terminus) with ESR1. Interacts with LIM/homeobox factors such as LHX3. Interacts with LDB1, LDB2 and SIN3A. Interacts with LIMK1.

The protein localises to the nucleus. It catalyses the reaction S-ubiquitinyl-[E2 ubiquitin-conjugating enzyme]-L-cysteine + [acceptor protein]-L-lysine = [E2 ubiquitin-conjugating enzyme]-L-cysteine + N(6)-ubiquitinyl-[acceptor protein]-L-lysine.. It participates in protein modification; protein ubiquitination. E3 ubiquitin-protein ligase that acts as a negative coregulator for LIM homeodomain transcription factors by mediating the ubiquitination and subsequent degradation of LIM cofactors LDB1 and LDB2 and by mediating the recruitment the SIN3a/histone deacetylase corepressor complex. Ubiquitination and degradation of LIM cofactors LDB1 and LDB2 allows DNA-bound LIM homeodomain transcription factors to interact with other protein partners such as RLIM. Plays a role in telomere length-mediated growth suppression by mediating the ubiquitination and degradation of TERF1. By targeting ZFP42 for degradation, acts as an activator of random inactivation of X chromosome in the embryo, a stochastic process in which one X chromosome is inactivated to minimize sex-related dosage differences of X-encoded genes in somatic cells of female placental mammals. The sequence is that of E3 ubiquitin-protein ligase RLIM (Rlim) from Mus musculus (Mouse).